Reading from the N-terminus, the 226-residue chain is 7-cyano-7-deazaguanine synthase (226 aa).

Residue 12–22 participates in ATP binding; sequence LSGGLDSATVV. The Zn(2+) site is built by cysteine 191, cysteine 201, cysteine 204, and cysteine 207.

Belongs to the QueC family. Requires Zn(2+) as cofactor.

It carries out the reaction 7-carboxy-7-deazaguanine + NH4(+) + ATP = 7-cyano-7-deazaguanine + ADP + phosphate + H2O + H(+). It participates in purine metabolism; 7-cyano-7-deazaguanine biosynthesis. In terms of biological role, catalyzes the ATP-dependent conversion of 7-carboxy-7-deazaguanine (CDG) to 7-cyano-7-deazaguanine (preQ(0)). The polypeptide is 7-cyano-7-deazaguanine synthase (Pseudomonas syringae pv. tomato (strain ATCC BAA-871 / DC3000)).